Consider the following 156-residue polypeptide: Small ribosomal subunit protein uS7 (156 aa).

The protein belongs to the universal ribosomal protein uS7 family. In terms of assembly, part of the 30S ribosomal subunit. Contacts proteins S9 and S11.

Its function is as follows. One of the primary rRNA binding proteins, it binds directly to 16S rRNA where it nucleates assembly of the head domain of the 30S subunit. Is located at the subunit interface close to the decoding center, probably blocks exit of the E-site tRNA. This Mycobacterium leprae (strain TN) protein is Small ribosomal subunit protein uS7.